The primary structure comprises 151 residues: Protein-export protein SecB (151 aa).

This sequence belongs to the SecB family. As to quaternary structure, homotetramer, a dimer of dimers. One homotetramer interacts with 1 SecA dimer.

The protein localises to the cytoplasm. Functionally, one of the proteins required for the normal export of preproteins out of the cell cytoplasm. It is a molecular chaperone that binds to a subset of precursor proteins, maintaining them in a translocation-competent state. It also specifically binds to its receptor SecA. The polypeptide is Protein-export protein SecB (Acinetobacter baylyi (strain ATCC 33305 / BD413 / ADP1)).